Consider the following 686-residue polypeptide: Gamma-aminobutyric acid receptor alpha-like (686 aa).

Positions 1 to 58 are cleaved as a signal peptide; that stretch reads MCTMPATRDASGSGDASTDLIAARSLSSHQGQRSNLRIFKLLISCCLLMLCIYPNAWP. Topologically, residues 97-393 are extracellular; it reads SSWLTQSNNH…NFHLQRHMGN (297 aa). N-linked (GlcNAc...) asparagine glycosylation occurs at asparagine 108. Cysteine 233 and cysteine 247 form a disulfide bridge. Asparagine 292 is a glycosylation site (N-linked (GlcNAc...) asparagine). Helical transmembrane passes span 394 to 414, 424 to 441, and 456 to 476; these read FLIQ…VSFW, VSLG…GLEA, and FFVF…AVVH. The Cytoplasmic portion of the chain corresponds to 477 to 650; that stretch reads YYTKYGSGEC…YNSVSKIDRA (174 aa). A disordered region spans residues 570–641; that stretch reads KPPRADSDED…RRKGKRTPQY (72 aa). Positions 586–596 are enriched in polar residues; the sequence is QLRANEAPTTS. Residues 597–609 are compositionally biased toward low complexity; sequence AAAAAAQAAAQAA. The helical transmembrane segment at 651-671 threads the bilayer; sequence SRIVFPLLFILINVFYWYGYL.

It belongs to the ligand-gated ion channel (TC 1.A.9) family. Gamma-aminobutyric acid receptor (TC 1.A.9.5) subfamily. Generally pentameric. There are five types of GABA(A) receptor chains: alpha, beta, gamma, delta, and rho. Interacts with Lcch3 (beta chain).

Its subcellular location is the postsynaptic cell membrane. It is found in the cell membrane. Functionally, GABA, an inhibitory neurotransmitter, mediates neuronal inhibition by binding to the GABA receptor and opening an integral chloride channel. May combine with the ligand-gated ion channel subunit Lcch3 to form cation-selective GABA-gated ion channels. This Drosophila melanogaster (Fruit fly) protein is Gamma-aminobutyric acid receptor alpha-like (Grd).